Consider the following 238-residue polypeptide: Sugar fermentation stimulation protein homolog (238 aa).

This sequence belongs to the SfsA family.

This is Sugar fermentation stimulation protein homolog from Actinobacillus succinogenes (strain ATCC 55618 / DSM 22257 / CCUG 43843 / 130Z).